Consider the following 349-residue polypeptide: Anthranilate phosphoribosyltransferase (349 aa).

5-phospho-alpha-D-ribose 1-diphosphate is bound by residues Gly-82, Gly-85–Asp-86, Asn-92–Thr-95, Lys-110–Gly-118, and Ser-122. Residue Gly-82 coordinates anthranilate. Ser-94 serves as a coordination point for Mg(2+). Asn-113 provides a ligand contact to anthranilate. Arg-168 is a binding site for anthranilate. The Mg(2+) site is built by Asp-227 and Glu-228.

Belongs to the anthranilate phosphoribosyltransferase family. Homodimer. The cofactor is Mg(2+).

The catalysed reaction is N-(5-phospho-beta-D-ribosyl)anthranilate + diphosphate = 5-phospho-alpha-D-ribose 1-diphosphate + anthranilate. It participates in amino-acid biosynthesis; L-tryptophan biosynthesis; L-tryptophan from chorismate: step 2/5. Functionally, catalyzes the transfer of the phosphoribosyl group of 5-phosphorylribose-1-pyrophosphate (PRPP) to anthranilate to yield N-(5'-phosphoribosyl)-anthranilate (PRA). The sequence is that of Anthranilate phosphoribosyltransferase from Pseudomonas putida (strain ATCC 700007 / DSM 6899 / JCM 31910 / BCRC 17059 / LMG 24140 / F1).